Here is a 207-residue protein sequence, read N- to C-terminus: MVLIIRPSQTLILFRKAMLKPIGRYPLKRNFFGLSGTNHTIREQRYVLRKAINAPPSTVYAAVSEVAQYKEFIPYCVDSFVDKRNPVDNKPLIAGLRVGFKQYDEEFICNVTCKDTDHTYTVVAETISHNLFHLLISKWTIMPHPNRPNAAMVELLLRFKFKSRIYNSVSLIFAKTVTELVMNAFAKRAYHLVRLAMLKPSSKEGSP.

Residues Met1–His39 constitute a mitochondrion transit peptide.

It belongs to the COQ10 family. In terms of assembly, interacts with coenzyme Q.

It localises to the mitochondrion inner membrane. Its function is as follows. Required for the function of coenzyme Q in the respiratory chain. May serve as a chaperone or may be involved in the transport of Q6 from its site of synthesis to the catalytic sites of the respiratory complexes. The chain is Coenzyme Q-binding protein COQ10, mitochondrial (COQ10) from Saccharomyces cerevisiae (strain ATCC 204508 / S288c) (Baker's yeast).